The following is a 478-amino-acid chain: Phosphatidylinositol 4-kinase type 2-alpha (478 aa).

Met1 carries the N-acetylmethionine modification. Residues 1 to 57 (MDETSPLVSPERAQPPEYTFPSVSGAHFPQVPGGAVRVAAAGSGPSPPCSPGHDRER) are disordered. Ser5, Ser9, Ser43, Ser46, and Ser50 each carry phosphoserine. Positions 31 to 44 (VPGGAVRVAAAGSG) are enriched in low complexity. Residues 123–452 (SIYPERIYQG…VQMPPVIVET (330 aa)) enclose the PI3K/PI4K catalytic domain. Residues 129-135 (IYQGSSG) are G-loop. ATP contacts are provided by residues 130–136 (YQGSSGS) and Lys151. Positions 156–158 (EPY) are important for substrate binding. Positions 164–177 (KWTKWLQKLCCPCC) are important for interaction with membranes. 4 S-palmitoyl cysteine lipidation sites follow: Cys173, Cys174, Cys176, and Cys177. Residue 260 to 263 (QLFV) participates in ATP binding. An important for interaction with membranes region spans residues 267–275 (KDADYWLRR). A catalytic loop region spans residues 304–312 (RNTDRGNDN). Residues 343–363 (AIDNGLAFPLKHPDSWRAYPF) form an activation loop region. Position 345 (Asp345) interacts with ATP. The tract at residues 358 to 367 (WRAYPFYWAW) is important for interaction with membranes. Phosphoserine is present on Ser461.

The protein belongs to the PI3/PI4-kinase family. Type II PI4K subfamily. As to quaternary structure, associates with the BLOC-1 and the AP-3 complexes; the BLOC-1 complex is required for optimal binding of PI4K2A to the AP-3 complex. Interacts with BLOC1S5 and DTNBP1. Interacts with FOS; this interaction may enhance phosphatidylinositol phosphorylation activity. Interacts with ITCH. Interacts with ATG9A. Ubiquitinated by ITCH; this does not lead to proteasomal degradation. In terms of processing, palmitoylated. Palmitoylated by ZDHHC3 and ZDHHC7 in the CCPCC motif. Palmitoylation is cholesterol-dependent, and required for TGN localization. Detected in adult brain, especially in neurons in the cerebellum, brain cortex, dorsal root ganglion and spinal cord (at protein level).

The protein resides in the golgi apparatus. The protein localises to the trans-Golgi network membrane. It is found in the membrane raft. Its subcellular location is the endosome. It localises to the endosome membrane. The protein resides in the cytoplasmic vesicle. The protein localises to the cell projection. It is found in the dendrite. Its subcellular location is the presynaptic cell membrane. It localises to the synapse. The protein resides in the synaptosome. The protein localises to the mitochondrion. It is found in the membrane. Its subcellular location is the cell membrane. It localises to the perikaryon. The protein resides in the neuron projection. The catalysed reaction is a 1,2-diacyl-sn-glycero-3-phospho-(1D-myo-inositol) + ATP = a 1,2-diacyl-sn-glycero-3-phospho-(1D-myo-inositol 4-phosphate) + ADP + H(+). Membrane-bound phosphatidylinositol-4 kinase (PI4-kinase) that catalyzes the phosphorylation of phosphatidylinositol (PI) to phosphatidylinositol 4-phosphate (PI4P), a lipid that plays important roles in endocytosis, Golgi function, protein sorting and membrane trafficking and is required for prolonged survival of neurons. Besides, phosphorylation of phosphatidylinositol (PI) to phosphatidylinositol 4-phosphate (PI4P) is the first committed step in the generation of phosphatidylinositol 4,5-bisphosphate (PIP2), a precursor of the second messenger inositol 1,4,5-trisphosphate (InsP3). The chain is Phosphatidylinositol 4-kinase type 2-alpha (Pi4k2a) from Rattus norvegicus (Rat).